We begin with the raw amino-acid sequence, 303 residues long: Protein translocase subunit SecF (303 aa).

Transmembrane regions (helical) follow at residues Ser-28 to Ile-48, Ile-140 to Val-160, Trp-164 to Phe-184, Leu-194 to Ile-214, Ile-246 to Ala-266, and Val-272 to Ile-292.

The protein belongs to the SecD/SecF family. SecF subfamily. Forms a complex with SecD. Part of the essential Sec protein translocation apparatus which comprises SecA, SecYEG and auxiliary proteins SecDF-YajC and YidC.

It is found in the cell inner membrane. Functionally, part of the Sec protein translocase complex. Interacts with the SecYEG preprotein conducting channel. SecDF uses the proton motive force (PMF) to complete protein translocation after the ATP-dependent function of SecA. The chain is Protein translocase subunit SecF from Rickettsia bellii (strain OSU 85-389).